Consider the following 120-residue polypeptide: Kidney androgen-regulated protein (120 aa).

The first 18 residues, 1-18 (MMICKVLVITVFCVLTVA), serve as a signal peptide directing secretion.

It localises to the secreted. The chain is Kidney androgen-regulated protein (Kap) from Rattus norvegicus (Rat).